The following is a 1364-amino-acid chain: DNA-directed RNA polymerase subunit beta' (1364 aa).

Residues cysteine 250, cysteine 317, cysteine 324, and cysteine 327 each contribute to the Zn(2+) site. Residues 1318-1342 (TRHNIDPSASTNAAFTRPDVDNELK) are disordered.

The protein belongs to the RNA polymerase beta' chain family. RpoC2 subfamily. In terms of assembly, in cyanobacteria the RNAP catalytic core is composed of 2 alpha, 1 beta, 1 beta', 1 gamma and 1 omega subunit. When a sigma factor is associated with the core the holoenzyme is formed, which can initiate transcription. The cofactor is Zn(2+).

The catalysed reaction is RNA(n) + a ribonucleoside 5'-triphosphate = RNA(n+1) + diphosphate. In terms of biological role, DNA-dependent RNA polymerase catalyzes the transcription of DNA into RNA using the four ribonucleoside triphosphates as substrates. The protein is DNA-directed RNA polymerase subunit beta' of Synechococcus sp. (strain CC9902).